A 413-amino-acid chain; its full sequence is MKFYLVGGAVRDNLLKLPIKDRDYMVVGAAPEQMFELGYKQVGKDFPVFLHPKTQQEYALARTERKTGSGYGGFSCDASPDVTLEEDLLRRDLTINAIAQDDKGELFDPYGGIKDIESKMLRHVSDAFVEDPLRVLRVARFAARFHHLGFTVADETLALMTKISQSGELEALTSERVFLELDKALSTQNPQIFIEVLNQCQALEILFPEIHALFGVPQPEKWHPEIDTGIHTLMVLAQAAKLSDENSVRFAALVHDLGKALSPKATLPKHHGHGQSGLALIKVLCARAKVPNEYRDLALLVSDQHQNVHNIRELRPETLIKIFDKADLWRKPDRLEQLATACEADSKGRLGLENSPYPQADYLRESFQVANSVAVKPIIEAGFKGAEIKEQLKLKRIEIVTEFKRNFNESAIE.

Residues glycine 8 and arginine 11 each coordinate ATP. Residues glycine 8 and arginine 11 each coordinate CTP. Residues aspartate 21 and aspartate 23 each contribute to the Mg(2+) site. The ATP site is built by arginine 91, arginine 137, and arginine 140. Positions 91, 137, and 140 each coordinate CTP. One can recognise an HD domain in the interval 228–329 (TGIHTLMVLA…IKIFDKADLW (102 aa)).

The protein belongs to the tRNA nucleotidyltransferase/poly(A) polymerase family. Bacterial CCA-adding enzyme type 1 subfamily. In terms of assembly, monomer. Can also form homodimers and oligomers. Mg(2+) is required as a cofactor. The cofactor is Ni(2+).

The catalysed reaction is a tRNA precursor + 2 CTP + ATP = a tRNA with a 3' CCA end + 3 diphosphate. It carries out the reaction a tRNA with a 3' CCA end + 2 CTP + ATP = a tRNA with a 3' CCACCA end + 3 diphosphate. Catalyzes the addition and repair of the essential 3'-terminal CCA sequence in tRNAs without using a nucleic acid template. Adds these three nucleotides in the order of C, C, and A to the tRNA nucleotide-73, using CTP and ATP as substrates and producing inorganic pyrophosphate. tRNA 3'-terminal CCA addition is required both for tRNA processing and repair. Also involved in tRNA surveillance by mediating tandem CCA addition to generate a CCACCA at the 3' terminus of unstable tRNAs. While stable tRNAs receive only 3'-terminal CCA, unstable tRNAs are marked with CCACCA and rapidly degraded. The sequence is that of Multifunctional CCA protein from Shewanella woodyi (strain ATCC 51908 / MS32).